A 580-amino-acid polypeptide reads, in one-letter code: Membrane protein insertase YidC (580 aa).

6 helical membrane-spanning segments follow: residues 5-25 (SVTG…FMSP), 259-279 (KYFV…LDGS), 362-382 (GLII…LSLA), 427-447 (LGGC…FYVF), 477-497 (IPMY…TVFV), and 513-533 (IMLY…PSGL).

It belongs to the OXA1/ALB3/YidC family. Type 1 subfamily. As to quaternary structure, interacts with the Sec translocase complex via SecD. Specifically interacts with transmembrane segments of nascent integral membrane proteins during membrane integration.

Its subcellular location is the cell inner membrane. Functionally, required for the insertion and/or proper folding and/or complex formation of integral membrane proteins into the membrane. Involved in integration of membrane proteins that insert both dependently and independently of the Sec translocase complex, as well as at least some lipoproteins. Aids folding of multispanning membrane proteins. This is Membrane protein insertase YidC from Chlorobium phaeovibrioides (strain DSM 265 / 1930) (Prosthecochloris vibrioformis (strain DSM 265)).